The sequence spans 737 residues: FYVE, RhoGEF and PH domain-containing protein 3 (737 aa).

Residues 1–151 (MESGGGSSTP…KADKDAGLAQ (151 aa)) form a disordered region. The segment covering 126–136 (ADSDVGEEPDS) has biased composition (acidic residues). At Ser128 the chain carries Phosphoserine. Residues 157–341 (KLLHIAQELL…STAANHSNAA (185 aa)) enclose the DH domain. Residues 370–469 (ELIKEGQIQK…WIQIIQATIE (100 aa)) enclose the PH 1 domain. A disordered region spans residues 487 to 533 (QDEDPSLSPDMPITSTSPVEPVVTTEGGSGAAGLEPRKLSSKTRRDK). Positions 500–512 (TSTSPVEPVVTTE) are enriched in low complexity. Residues 521-533 (EPRKLSSKTRRDK) show a composition bias toward basic and acidic residues. The FYVE-type zinc-finger motif lies at 532–588 (DKEKQSCKSCGETFNSITKRRHHCKLCGVVICGKCSEFKAENSRQSRVCRECFLTQP). Residues Cys538, Cys541, Cys555, Cys558, Cys563, Cys566, Cys580, and Cys583 each contribute to the Zn(2+) site. 2 disordered regions span residues 589 to 620 (VAPESPSPEAPAKPRRSTEKTPTADPQPSLLC) and 713 to 737 (AARGDTAQDSPGALQPQVPTGAAAP). The PH 2 domain occupies 616–715 (PSLLCGPLRL…WLETLSTAAR (100 aa)).

The protein resides in the cytoplasm. It is found in the cytoskeleton. Its function is as follows. Promotes the formation of filopodia. May activate CDC42, a member of the Ras-like family of Rho- and Rac proteins, by exchanging bound GDP for free GTP. Plays a role in regulating the actin cytoskeleton and cell shape. The polypeptide is FYVE, RhoGEF and PH domain-containing protein 3 (FGD3) (Pongo abelii (Sumatran orangutan)).